Here is a 722-residue protein sequence, read N- to C-terminus: NCK-interacting protein with SH3 domain (722 aa).

Residues Met1–Gly58 form the SH3 domain. Disordered stretches follow at residues Lys101–Ser122 and Pro149–Asp286. A compositionally biased stretch (low complexity) spans Ser110–Thr121. The residue at position 120 (Ser120) is a Phosphoserine. The span at Gln169–Pro185 shows a compositional bias: pro residues. The short motif at Arg175 to Glu192 is the Nuclear localization signal element. Thr181 is subject to Phosphothreonine. Over residues Pro206–Ser240 the composition is skewed to low complexity. Ser294 is modified (phosphoserine).

In terms of assembly, associates with the intermediate filaments, vimentin and desmin. Binds the first and third SH3 domains of NCK. Binds the proline-rich domains of N-WASP through its SH3 domain. Similarly, binds diaphanous protein homolog 1 (DRF1). Binds the SH3 domains of GRB2 through its proline-rich domains. Interacts with Helicobacter pylori toxin vacA. Isoform 4 interacts with FHOD1. Interacts with FASLG. Interacts with TMIGD2. In terms of tissue distribution, highest expression in heart, brain, skeletal muscle, kidney and liver. Lower levels in placenta, lung, small intestine and leukocytes. Weak expression in colon, thymus and spleen.

The protein localises to the nucleus. Has an important role in stress fiber formation induced by active diaphanous protein homolog 1 (DRF1). Induces microspike formation, in vivo. In vitro, stimulates N-WASP-induced ARP2/3 complex activation in the absence of CDC42. May play an important role in the maintenance of sarcomeres and/or in the assembly of myofibrils into sarcomeres. Implicated in regulation of actin polymerization and cell adhesion. Plays a role in angiogenesis. The polypeptide is NCK-interacting protein with SH3 domain (NCKIPSD) (Homo sapiens (Human)).